We begin with the raw amino-acid sequence, 139 residues long: MIIGIGSDLIDIRRIENSLQRFGERFVNRCFTDIEIAKSDGRKNRAASYAKRFAAKEACSKALGTGLAQGVFWKEMGVVNLPGGKPTMQLTGGAAARLREMLPVGHRAAIHLTITDDFPLAQAFVIIEALPVAPAEGTV.

The Mg(2+) site is built by D8 and E57.

This sequence belongs to the P-Pant transferase superfamily. AcpS family. Mg(2+) is required as a cofactor.

It localises to the cytoplasm. It catalyses the reaction apo-[ACP] + CoA = holo-[ACP] + adenosine 3',5'-bisphosphate + H(+). Transfers the 4'-phosphopantetheine moiety from coenzyme A to a Ser of acyl-carrier-protein. This is Holo-[acyl-carrier-protein] synthase from Sinorhizobium medicae (strain WSM419) (Ensifer medicae).